A 561-amino-acid polypeptide reads, in one-letter code: uncharacterized protein (561 aa).

2 helical membrane passes run 29-49 and 80-100; these read FIFN…KKII and FLFH…AVVI.

The protein resides in the cell membrane. This is an uncharacterized protein from Mycoplasma pneumoniae (strain ATCC 29342 / M129 / Subtype 1) (Mycoplasmoides pneumoniae).